The chain runs to 577 residues: Urease subunit alpha (577 aa).

Residues 136–577 (GAIDCHVHLI…LPMAQRYFLF (442 aa)) enclose the Urease domain. His141, His143, and Lys224 together coordinate Ni(2+). Lys224 carries the N6-carboxylysine modification. Residue His226 coordinates substrate. 2 residues coordinate Ni(2+): His253 and His279. The Proton donor role is filled by His327. Asp367 lines the Ni(2+) pocket.

Belongs to the metallo-dependent hydrolases superfamily. Urease alpha subunit family. Heterotrimer of UreA (gamma), UreB (beta) and UreC (alpha) subunits. Three heterotrimers associate to form the active enzyme. It depends on Ni cation as a cofactor. Carboxylation allows a single lysine to coordinate two nickel ions.

Its subcellular location is the cytoplasm. The enzyme catalyses urea + 2 H2O + H(+) = hydrogencarbonate + 2 NH4(+). The protein operates within nitrogen metabolism; urea degradation; CO(2) and NH(3) from urea (urease route): step 1/1. The chain is Urease subunit alpha from Mycobacterium ulcerans (strain Agy99).